We begin with the raw amino-acid sequence, 467 residues long: A-type ATP synthase subunit B (467 aa).

Belongs to the ATPase alpha/beta chains family. In terms of assembly, has multiple subunits with at least A(3), B(3), C, D, E, F, H, I and proteolipid K(x).

The protein localises to the cell membrane. Component of the A-type ATP synthase that produces ATP from ADP in the presence of a proton gradient across the membrane. The B chain is a regulatory subunit. In Methanosphaera stadtmanae (strain ATCC 43021 / DSM 3091 / JCM 11832 / MCB-3), this protein is A-type ATP synthase subunit B.